The sequence spans 875 residues: F-box only protein 41 (875 aa).

Disordered stretches follow at residues 85-110, 165-194, and 347-542; these read ESTSFQGKEQAAGPSPAAPHLLHHHH, SSACSTPPPGPGPGPCPGPASASPASPSPA, and SSSC…PSRS. A compositionally biased stretch (pro residues) spans 170-182; sequence TPPPGPGPGPCPG. The span at 183-194 shows a compositional bias: low complexity; sequence PASASPASPSPA. A coiled-coil region spans residues 209–351; sequence ALEKLEVDRR…QLQVISSSCG (143 aa). Residues 347-356 are compositionally biased toward polar residues; the sequence is SSSCGSTPSA. Residues 359–368 are compositionally biased toward gly residues; it reads GRGGGGGGAG. Arginine 360 is subject to Omega-N-methylarginine. A compositionally biased stretch (polar residues) spans 395 to 416; sequence HGSSPSTGASSRVPAASQSSGC. Serine 478 is subject to Phosphoserine. Threonine 479 carries the phosphothreonine modification. The region spanning 496-540 is the F-box domain; the sequence is SEAEGPLDAPRPGPAMAGPLSSCRLSARPEGGSGRGRRAERVSPS. Position 762 is a phosphoserine (serine 762).

Directly interacts with SKP1 and CUL1.

Functionally, substrate-recognition component of the SCF (SKP1-CUL1-F-box protein)-type E3 ubiquitin ligase complex. The polypeptide is F-box only protein 41 (FBXO41) (Homo sapiens (Human)).